Consider the following 228-residue polypeptide: MPLNAVRVASKAQPAKNVILVFHGLGDSGSGWSFLAEYLQRSPAFAHTRFVFPNAPNMRIDANGGMSMPAWFNIYDWANPDARVDVEGIKSSLKVINSFIQEQIDDGISPENIILGGFSQGAALTLASTVTSPYKLGGFFALSGFCRLKKEDLDSIAENKNKDTPVFHGHGDQDPIIPIQYGSDAKKFFEKYFHLSDYDFKSYRGMAHSTSLEEMQDLVQFLSKALKL.

Active-site charge relay system residues include Ser119, Asp174, and His208.

This sequence belongs to the AB hydrolase superfamily. AB hydrolase 2 family.

The protein localises to the cytoplasm. Its subcellular location is the nucleus. It catalyses the reaction S-hexadecanoyl-L-cysteinyl-[protein] + H2O = L-cysteinyl-[protein] + hexadecanoate + H(+). Functionally, hydrolyzes fatty acids from S-acylated cysteine residues in proteins with a strong preference for palmitoylated G-alpha proteins over other acyl substrates. Mediates the deacylation of G-alpha proteins such as GPA1 in vivo, but has weak or no activity toward palmitoylated Ras proteins. Has weak lysophospholipase activity in vitro; however such activity may not exist in vivo. This is Acyl-protein thioesterase 1 from Kluyveromyces lactis (strain ATCC 8585 / CBS 2359 / DSM 70799 / NBRC 1267 / NRRL Y-1140 / WM37) (Yeast).